The following is a 123-amino-acid chain: Succinate dehydrogenase assembly factor 3, mitochondrial (123 aa).

Residues 1 to 31 (MANPAHISAVRTLYKKILVLHRFLPIDLRAL) constitute a mitochondrion transit peptide.

The protein belongs to the complex I LYR family. SDHAF3 subfamily. As to quaternary structure, interacts with sdhb within an sdha-sdhb subcomplex.

The protein localises to the mitochondrion matrix. Plays an essential role in the assembly of succinate dehydrogenase (SDH), an enzyme complex (also referred to as respiratory complex II) that is a component of both the tricarboxylic acid (TCA) cycle and the mitochondrial electron transport chain, and which couples the oxidation of succinate to fumarate with the reduction of ubiquinone (coenzyme Q) to ubiquinol. Promotes maturation of the iron-sulfur protein subunit sdhb of the SDH catalytic dimer, protecting it from the deleterious effects of oxidants. May act together with SDHAF1. In Danio rerio (Zebrafish), this protein is Succinate dehydrogenase assembly factor 3, mitochondrial.